The primary structure comprises 195 residues: Insertion element IS136 uncharacterized protein Atu4601 (195 aa).

The Integrase catalytic domain maps to 25–194 (MVMRSNLRWC…SPRQFIRAKS (170 aa)).

The sequence is that of Insertion element IS136 uncharacterized protein Atu4601 from Agrobacterium fabrum (strain C58 / ATCC 33970) (Agrobacterium tumefaciens (strain C58)).